We begin with the raw amino-acid sequence, 318 residues long: Olfactory receptor-like protein COR1 (318 aa).

Over M1 to P26 the chain is Extracellular. A glycan (N-linked (GlcNAc...) asparagine) is linked at N5. Residues L27–I49 form a helical membrane-spanning segment. Residues S50–T57 are Cytoplasmic-facing. The helical transmembrane segment at P58 to P79 threads the bilayer. At K80–Q100 the chain is on the extracellular side. The cysteines at positions 97 and 179 are disulfide-linked. The helical transmembrane segment at Y101–Y120 threads the bilayer. Residues D121–A139 are Cytoplasmic-facing. The helical transmembrane segment at V140 to L164 threads the bilayer. The Extracellular portion of the chain corresponds to K165–L205. A helical transmembrane segment spans residues F206–V226. At M227–S239 the chain is on the cytoplasmic side. Residues T240–L260 traverse the membrane as a helical segment. The Extracellular portion of the chain corresponds to R261–D271. The helical transmembrane segment at K272–W292 threads the bilayer. The Cytoplasmic segment spans residues R293–Q318.

It belongs to the G-protein coupled receptor 1 family.

It is found in the cell membrane. Odorant receptor. The protein is Olfactory receptor-like protein COR1 (COR1) of Gallus gallus (Chicken).